The sequence spans 361 residues: Phospho-N-acetylmuramoyl-pentapeptide-transferase (361 aa).

10 helical membrane passes run 21–41 (YLTV…LWIG), 74–94 (MGGI…ANLA), 97–117 (YVWF…VDDY), 132–152 (WKYF…YAIG), 168–188 (VMPQ…VGTG), 199–219 (GLAI…AWAT), 239–259 (LVIF…FNTY), 264–284 (FMGD…AVLV), 288–308 (FLLV…ILQV), and 339–359 (VIIR…ITLK).

It belongs to the glycosyltransferase 4 family. MraY subfamily. Requires Mg(2+) as cofactor.

Its subcellular location is the cell inner membrane. It carries out the reaction UDP-N-acetyl-alpha-D-muramoyl-L-alanyl-gamma-D-glutamyl-meso-2,6-diaminopimeloyl-D-alanyl-D-alanine + di-trans,octa-cis-undecaprenyl phosphate = di-trans,octa-cis-undecaprenyl diphospho-N-acetyl-alpha-D-muramoyl-L-alanyl-D-glutamyl-meso-2,6-diaminopimeloyl-D-alanyl-D-alanine + UMP. It participates in cell wall biogenesis; peptidoglycan biosynthesis. Its function is as follows. Catalyzes the initial step of the lipid cycle reactions in the biosynthesis of the cell wall peptidoglycan: transfers peptidoglycan precursor phospho-MurNAc-pentapeptide from UDP-MurNAc-pentapeptide onto the lipid carrier undecaprenyl phosphate, yielding undecaprenyl-pyrophosphoryl-MurNAc-pentapeptide, known as lipid I. The protein is Phospho-N-acetylmuramoyl-pentapeptide-transferase of Histophilus somni (strain 129Pt) (Haemophilus somnus).